We begin with the raw amino-acid sequence, 124 residues long: Histone H2A (124 aa).

The segment covering 1 to 18 (MSGRGKGGKAKGKSKSRS) has biased composition (basic residues). Residues 1-23 (MSGRGKGGKAKGKSKSRSSRAGL) are disordered. At serine 2 the chain carries N-acetylserine. Serine 2 bears the Phosphoserine mark. Glutamine 104 is modified (N5-methylglutamine).

This sequence belongs to the histone H2A family. In terms of assembly, the nucleosome is a histone octamer containing two molecules each of H2A, H2B, H3 and H4 assembled in one H3-H4 heterotetramer and two H2A-H2B heterodimers. The octamer wraps approximately 147 bp of DNA. Post-translationally, the N-terminal serine is acetylated. That serine is also phosphorylated in approximately 60% of the molecules isolated from erythrocytes.

Its subcellular location is the nucleus. The protein localises to the chromosome. In terms of biological role, core component of nucleosome. Nucleosomes wrap and compact DNA into chromatin, limiting DNA accessibility to the cellular machineries which require DNA as a template. Histones thereby play a central role in transcription regulation, DNA repair, DNA replication and chromosomal stability. DNA accessibility is regulated via a complex set of post-translational modifications of histones, also called histone code, and nucleosome remodeling. This Sipunculus nudus (Sipunculan worm) protein is Histone H2A.